A 311-amino-acid polypeptide reads, in one-letter code: Serine/threonine-protein phosphatase 4 catalytic subunit A (311 aa).

Mn(2+)-binding residues include aspartate 58, histidine 60, aspartate 86, and asparagine 118. The Proton donor role is filled by histidine 119. Histidine 168 and histidine 242 together coordinate Mn(2+). Leucine 311 carries the post-translational modification Leucine methyl ester.

Belongs to the PPP phosphatase family. PP-4 (PP-X) subfamily. Serine/threonine-protein phosphatase 4 (PP4) occurs in different assemblies of the catalytic and one or more regulatory subunits. Requires Mn(2+) as cofactor.

The protein resides in the cytoplasm. The protein localises to the cytoskeleton. Its subcellular location is the microtubule organizing center. It is found in the centrosome. The enzyme catalyses O-phospho-L-seryl-[protein] + H2O = L-seryl-[protein] + phosphate. It carries out the reaction O-phospho-L-threonyl-[protein] + H2O = L-threonyl-[protein] + phosphate. Its function is as follows. Protein phosphatase that regulates many processes such as microtubule organization at centrosomes. The chain is Serine/threonine-protein phosphatase 4 catalytic subunit A (ppp4ca) from Danio rerio (Zebrafish).